Here is a 316-residue protein sequence, read N- to C-terminus: Acetyl-coenzyme A carboxylase carboxyl transferase subunit beta, chloroplastic (316 aa).

Residues Leu-47–Lys-316 form the CoA carboxyltransferase N-terminal domain. Zn(2+) contacts are provided by Cys-51, Cys-54, Cys-70, and Cys-73. A C4-type zinc finger spans residues Cys-51 to Cys-73.

The protein belongs to the AccD/PCCB family. In terms of assembly, acetyl-CoA carboxylase is a heterohexamer composed of biotin carboxyl carrier protein, biotin carboxylase and 2 subunits each of ACCase subunit alpha and ACCase plastid-coded subunit beta (accD). Requires Zn(2+) as cofactor.

Its subcellular location is the plastid. It is found in the chloroplast stroma. It catalyses the reaction N(6)-carboxybiotinyl-L-lysyl-[protein] + acetyl-CoA = N(6)-biotinyl-L-lysyl-[protein] + malonyl-CoA. Its pathway is lipid metabolism; malonyl-CoA biosynthesis; malonyl-CoA from acetyl-CoA: step 1/1. Its function is as follows. Component of the acetyl coenzyme A carboxylase (ACC) complex. Biotin carboxylase (BC) catalyzes the carboxylation of biotin on its carrier protein (BCCP) and then the CO(2) group is transferred by the transcarboxylase to acetyl-CoA to form malonyl-CoA. The sequence is that of Acetyl-coenzyme A carboxylase carboxyl transferase subunit beta, chloroplastic from Marchantia polymorpha (Common liverwort).